The sequence spans 407 residues: Odorant receptor 67a (407 aa).

Topologically, residues 1-40 (MDNVAEMPEEKYVEVDDFLRLAVKFYNTLGIDPYETGRKR) are cytoplasmic. The helical transmembrane segment at 41-61 (TIWFQIYFALNMFNMVFSFYA) threads the bilayer. Residues 62–79 (EVATLVDRLRDNENFLES) are Extracellular-facing. A helical transmembrane segment spans residues 80-100 (CILLSYVSFVVMGLSKIGAVM). Topologically, residues 101–144 (KKKPKMTALVRQLETCFPSPSAKVQEEYAVKSWLKRCHIYTKGF) are cytoplasmic. A helical membrane pass occupies residues 145-165 (GGLFMIMYFAHALIPLFIYFI). Residues 166-208 (QRVLLHYPDAKQIMPFYQLEPWEFRDSWLFYPSYFHQSSAGYT) are Extracellular-facing. A helical membrane pass occupies residues 209 to 229 (ATCGSIAGDLMIFAVVLQVIM). Residues 230 to 278 (HYERLAKVLREFKIQAHNAPNGAKEDIRKLQSLVANHIDILRLTDLMNE) are Cytoplasmic-facing. A helical transmembrane segment spans residues 279-300 (VFGIPLLLNFIASALLVCLVGV). Over 301–314 (QLTIALSPEYFCKQ) the chain is Extracellular. Residues 315 to 331 (MLFLISVLLEVYLLCSF) form a helical membrane-spanning segment. The Cytoplasmic segment spans residues 332-378 (SQRLIDASENVGHAAYDMDWLGSDKRFKKILIFISMRSQKPVCLKAT). Residues 379–401 (VVLDLSMPTMSIFLGMSYKFFCA) traverse the membrane as a helical segment. Topologically, residues 402 to 407 (VRTMYQ) are extracellular.

The protein belongs to the insect chemoreceptor superfamily. Heteromeric odorant receptor channel (TC 1.A.69) family. Or49a subfamily. Interacts with Orco. Complexes exist early in the endomembrane system in olfactory sensory neurons (OSNs), coupling these complexes to the conserved ciliary trafficking pathway. In terms of tissue distribution, expressed in olfactory sensory neurons in the antenna.

Its subcellular location is the cell membrane. Its function is as follows. Odorant receptor which mediates acceptance or avoidance behavior, depending on its substrates. The odorant receptor repertoire encodes a large collection of odor stimuli that vary widely in identity, intensity, and duration. Forms a complex with Orco to form odorant-sensing units, providing sensitive and prolonged odorant signaling and calcium permeability. Involved in the behavioral responses to benzaldehyde and acetophenone. The protein is Odorant receptor 67a (Or67a) of Drosophila melanogaster (Fruit fly).